A 693-amino-acid polypeptide reads, in one-letter code: Transforming growth factor beta activator LRRC33 (693 aa).

The signal sequence occupies residues 1-19 (MEFPPLWLCLGFHFLIVEW). At 20-651 (RSGPGTATAA…CKWEQVDTGL (632 aa)) the chain is on the extracellular side. The LRRNT domain maps to 29–56 (ASQGGCKVVDGVADCRGLNLASVPSSLP). LRR repeat units lie at residues 58 to 79 (HSRMLILDANPLKDLWNHSLQA), 82 to 103 (RLENLSLHSCHLDRISHYAFRE), 106 to 127 (HLRNLVLADNRLSENYKESAAA), 133 to 155 (GLRRLDLSGNSLTEDMAALMLQN), 158 to 179 (SLEVVSLARNTLMRLDDSIFEG), 182 to 203 (HLVELDLQRNYIFEIEGGAFDG), 206 to 227 (ELRRLNLAYNNLPCIVDFSLTQ), 228 to 239 (LRFLNVSYNILE), 251 to 272 (ELEILDLSHNQLLFFPLLPQCG), and 273 to 294 (KLHTLLLQDNNMGFYRELYNTS). N-linked (GlcNAc...) asparagine glycosylation is found at asparagine 74 and asparagine 85. N-linked (GlcNAc...) asparagine glycosylation is present at asparagine 155. An N-linked (GlcNAc...) asparagine glycan is attached at asparagine 232. Asparagine 292, asparagine 309, and asparagine 312 each carry an N-linked (GlcNAc...) asparagine glycan. LRR repeat units lie at residues 329-350 (ALRFLDMSQNQFRHLPDGFLKK), 353-374 (SLSHLNLNQNCLKMLHIREHEP), 377-398 (ALTELDLSHNQLAELHLAPGLT), 403-424 (NLRVFNLSSNQLLGVPTGLFDN), 427-448 (SITTIDMSHNQISLCPQMVPVD), 463-484 (SLRSLSLDGCGLKALQDCPFQG), 486-507 (SLTHLDLSSNWGVLNGSISPLW), 512-533 (TLQVLSLRDVGLGSGAAEMDFS), 537-558 (NLRALDLSGNSLTSFPKFKGSL), 559-580 (ALRTLDLRRNSLTALPQRVVSE), and 585-605 (GLQTIYLSQNPYDCCGVEGWG). N-linked (GlcNAc...) asparagine glycans are attached at residues asparagine 408 and asparagine 424. An N-linked (GlcNAc...) asparagine glycan is attached at asparagine 500. The LRRCT domain maps to 606–644 (ALQQHFKTVADLSMVTCNLSSKIVRVVELPEGLPQGCKW). Asparagine 623 is a glycosylation site (N-linked (GlcNAc...) asparagine). A helical membrane pass occupies residues 652–672 (FYLVLILPSCLTLLVACTVVF). Residues 673–693 (LTFKKPLLQVIKSRCHWSSIY) are Cytoplasmic-facing.

It belongs to the LRRC32/LRRC33 family. Interacts with TGFB1; associates via disulfide bonds with the Latency-associated peptide chain (LAP) regulatory chain of TGFB1, leading to regulate activation of TGF-beta-1. Interacts (via LRR repeats) with TLR2, TLR3, TLR4, TLR9 and probably other Toll-like receptors. Interacts with CYBB/NOX2; the interaction is direct. In terms of processing, N-glycosylated. In terms of tissue distribution, mainly expressed in cells of hematopoietic origin, such as in immune organs such as lymph nodes, thymus and spleen. Among leukocytes, expressed at higher level in myeloid cell such as macrophages, neutrophils and dendritic cells. Highly expressed in central nervous system-resident macrophages, including microglia and perivascular macrophages.

The protein resides in the cell membrane. It is found in the endoplasmic reticulum membrane. Functionally, key regulator of transforming growth factor beta-1 (TGFB1) specifically required for microglia function in the nervous system. Required for activation of latent TGF-beta-1 in macrophages and microglia: associates specifically via disulfide bonds with the Latency-associated peptide (LAP), which is the regulatory chain of TGFB1, and regulates integrin-dependent activation of TGF-beta-1. TGF-beta-1 activation mediated by LRRC33/NRROS is highly localized: there is little spreading of TGF-beta-1 activated from one microglial cell to neighboring microglia, suggesting the existence of localized and selective activation of TGF-beta-1 by LRRC33/NRROS. Indirectly plays a role in Toll-like receptor (TLR) signaling: ability to inhibit TLR-mediated NF-kappa-B activation and cytokine production is probably a consequence of its role in TGF-beta-1 signaling. This chain is Transforming growth factor beta activator LRRC33, found in Mus musculus (Mouse).